A 380-amino-acid chain; its full sequence is Erythronate-4-phosphate dehydrogenase (380 aa).

Substrate is bound by residues S45 and T66. NAD(+) contacts are provided by residues D146, T174, 205-207 (ASR), and D231. Residue R207 is part of the active site. E236 is a catalytic residue. H253 functions as the Proton donor in the catalytic mechanism. Residue G256 participates in NAD(+) binding. Position 257 (Y257) interacts with substrate.

It belongs to the D-isomer specific 2-hydroxyacid dehydrogenase family. PdxB subfamily. As to quaternary structure, homodimer.

It localises to the cytoplasm. It carries out the reaction 4-phospho-D-erythronate + NAD(+) = (R)-3-hydroxy-2-oxo-4-phosphooxybutanoate + NADH + H(+). Its pathway is cofactor biosynthesis; pyridoxine 5'-phosphate biosynthesis; pyridoxine 5'-phosphate from D-erythrose 4-phosphate: step 2/5. In terms of biological role, catalyzes the oxidation of erythronate-4-phosphate to 3-hydroxy-2-oxo-4-phosphonooxybutanoate. This chain is Erythronate-4-phosphate dehydrogenase, found in Pseudomonas putida (strain GB-1).